The primary structure comprises 189 residues: MSRLWLTGYRSYELGVFGSQDPKLLVIKDTLKKLLIGKLENGMDWLITGGQLGVEQWAAEVGLALKPDYPELKIAMMTPFAEFGSNWNENNRGTYAQLASRVDFHQSVSEQPYHGPQQLRNYQEFMLTHTDEAVMVYDLEVEGKPKYDYEAITRFAEQHAYPLTLIDMDWLQESANEYQENSNNGSQFE.

The protein belongs to the UPF0398 family.

The protein is UPF0398 protein LVIS_0849 of Levilactobacillus brevis (strain ATCC 367 / BCRC 12310 / CIP 105137 / JCM 1170 / LMG 11437 / NCIMB 947 / NCTC 947) (Lactobacillus brevis).